The sequence spans 876 residues: DNA mismatch repair protein MutS (876 aa).

628–635 provides a ligand contact to ATP; that stretch reads GPNMAGKS.

The protein belongs to the DNA mismatch repair MutS family.

This protein is involved in the repair of mismatches in DNA. It is possible that it carries out the mismatch recognition step. This protein has a weak ATPase activity. This Chlorobaculum parvum (strain DSM 263 / NCIMB 8327) (Chlorobium vibrioforme subsp. thiosulfatophilum) protein is DNA mismatch repair protein MutS.